The primary structure comprises 482 residues: UDP-N-acetylmuramate--L-alanine ligase (482 aa).

123-129 contacts ATP; it reads GTHGKTT.

This sequence belongs to the MurCDEF family.

Its subcellular location is the cytoplasm. It carries out the reaction UDP-N-acetyl-alpha-D-muramate + L-alanine + ATP = UDP-N-acetyl-alpha-D-muramoyl-L-alanine + ADP + phosphate + H(+). The protein operates within cell wall biogenesis; peptidoglycan biosynthesis. Functionally, cell wall formation. This Pseudomonas entomophila (strain L48) protein is UDP-N-acetylmuramate--L-alanine ligase.